The chain runs to 268 residues: Zinc transporter ZupT (268 aa).

The next 8 helical transmembrane spans lie at 5–25, 36–56, 75–95, 124–144, 157–177, 187–207, 211–231, and 248–268; these read ILFA…GSLI, VLTI…MIEI, VVTV…DKLI, MGLF…LATF, IAVA…APIF, FILS…GYFL, FFSP…MVYI, and FAIG…LLFT. Positions 136 and 139 each coordinate Fe(2+). 2 residues coordinate Zn(2+): glutamate 139 and histidine 164. Residues asparagine 165, glutamate 168, and glutamate 197 each coordinate Fe(2+). Residue glutamate 168 participates in Zn(2+) binding.

This sequence belongs to the ZIP transporter (TC 2.A.5) family. ZupT subfamily.

It is found in the cell membrane. The enzyme catalyses Zn(2+)(in) = Zn(2+)(out). Its function is as follows. Mediates zinc uptake. May also transport other divalent cations. The chain is Zinc transporter ZupT from Chlorobium chlorochromatii (strain CaD3).